The sequence spans 120 residues: Large ribosomal subunit protein uL24 (120 aa).

The segment at methionine 1–alanine 26 is disordered. A compositionally biased stretch (basic residues) spans lysine 10–valine 24.

It belongs to the universal ribosomal protein uL24 family. In terms of assembly, part of the 50S ribosomal subunit. Interacts weakly with protein L4.

Its function is as follows. One of two assembly initiator proteins, it binds directly to the 5'-end of the 23S rRNA, where it nucleates assembly of the 50S subunit. Stabilizes the tertiary rRNA structure within the 23S rRNA domain (domain I) to which it binds. Located at the polypeptide exit tunnel on the outside of the subunit. This chain is Large ribosomal subunit protein uL24 (rpl24), found in Haloarcula marismortui (strain ATCC 43049 / DSM 3752 / JCM 8966 / VKM B-1809) (Halobacterium marismortui).